Here is a 180-residue protein sequence, read N- to C-terminus: Protein GrpE (180 aa).

Over residues 1 to 19 (MAEKKRAQEQEKVQEDQKM) the composition is skewed to basic and acidic residues. Positions 1–25 (MAEKKRAQEQEKVQEDQKMQNEQNE) are disordered.

The protein belongs to the GrpE family. Homodimer.

The protein resides in the cytoplasm. In terms of biological role, participates actively in the response to hyperosmotic and heat shock by preventing the aggregation of stress-denatured proteins, in association with DnaK and GrpE. It is the nucleotide exchange factor for DnaK and may function as a thermosensor. Unfolded proteins bind initially to DnaJ; upon interaction with the DnaJ-bound protein, DnaK hydrolyzes its bound ATP, resulting in the formation of a stable complex. GrpE releases ADP from DnaK; ATP binding to DnaK triggers the release of the substrate protein, thus completing the reaction cycle. Several rounds of ATP-dependent interactions between DnaJ, DnaK and GrpE are required for fully efficient folding. The chain is Protein GrpE from Nitratiruptor sp. (strain SB155-2).